Here is a 446-residue protein sequence, read N- to C-terminus: Iroquois-class homeodomain protein IRX-6 (446 aa).

The segment at residues 146–208 (GAGRRKNATR…NARRRLKKEN (63 aa)) is a DNA-binding region (homeobox). Disordered stretches follow at residues 208–273 (NKMT…EDEE) and 362–394 (AVEGAPPARPRPRSPECRMIPGQPPASARRLSV). Basic and acidic residues predominate over residues 217-226 (KGGEERKAEG). Acidic residues predominate over residues 256–273 (LEDLEEEEEEEEEAEDEE).

Belongs to the TALE/IRO homeobox family.

It is found in the nucleus. In terms of biological role, transcription factor. Binds to the iroquois binding site (IBS) motif of target genes to regulate gene expression; functions as a transcriptional activator or repressor. Modulates expression of RCVRN, VSX1, BHLHE22/BHLHB5 and TACR3/Nk3r. Required downstream of retinal bipolar cell specification for the terminal differentiation of type 2, type 3a and possibly type 6 bipolar cells. This Homo sapiens (Human) protein is Iroquois-class homeodomain protein IRX-6 (IRX6).